Here is a 428-residue protein sequence, read N- to C-terminus: Enolase (428 aa).

Gln-163 contacts (2R)-2-phosphoglycerate. Glu-205 (proton donor) is an active-site residue. 3 residues coordinate Mg(2+): Asp-242, Glu-285, and Asp-312. (2R)-2-phosphoglycerate-binding residues include Lys-337, Arg-366, Ser-367, and Lys-388. Lys-337 serves as the catalytic Proton acceptor.

It belongs to the enolase family. Requires Mg(2+) as cofactor.

Its subcellular location is the cytoplasm. The protein localises to the secreted. It localises to the cell surface. It carries out the reaction (2R)-2-phosphoglycerate = phosphoenolpyruvate + H2O. It participates in carbohydrate degradation; glycolysis; pyruvate from D-glyceraldehyde 3-phosphate: step 4/5. In terms of biological role, catalyzes the reversible conversion of 2-phosphoglycerate (2-PG) into phosphoenolpyruvate (PEP). It is essential for the degradation of carbohydrates via glycolysis. The polypeptide is Enolase (Carboxydothermus hydrogenoformans (strain ATCC BAA-161 / DSM 6008 / Z-2901)).